Here is a 99-residue protein sequence, read N- to C-terminus: Integration host factor subunit alpha (99 aa).

Residues 49-72 (FGNFDLRDKNQRPGRNPKTGEDIP) are disordered.

It belongs to the bacterial histone-like protein family. As to quaternary structure, heterodimer of an alpha and a beta chain.

In terms of biological role, this protein is one of the two subunits of integration host factor, a specific DNA-binding protein that functions in genetic recombination as well as in transcriptional and translational control. This chain is Integration host factor subunit alpha, found in Escherichia coli O9:H4 (strain HS).